The chain runs to 490 residues: Cytochrome P450 2C50 (490 aa).

The residue at position 127 (Ser-127) is a Phosphoserine. 2 positions are modified to N6-acetyllysine: Lys-249 and Lys-375. Cys-435 provides a ligand contact to heme.

The protein belongs to the cytochrome P450 family. The cofactor is heme. In terms of tissue distribution, expressed in heart and liver.

The protein resides in the endoplasmic reticulum membrane. Its subcellular location is the microsome membrane. The catalysed reaction is an organic molecule + reduced [NADPH--hemoprotein reductase] + O2 = an alcohol + oxidized [NADPH--hemoprotein reductase] + H2O + H(+). Its function is as follows. Metabolizes arachidonic acid to several midchain and omega-terminal hydroxyeicosatetraenoic acids (HETE). The polypeptide is Cytochrome P450 2C50 (Mus musculus (Mouse)).